Consider the following 938-residue polypeptide: Translation initiation factor IF-2 (938 aa).

The span at 57–205 (DKSKKVASKE…PKSEETKSEE (149 aa)) shows a compositional bias: basic and acidic residues. Positions 57 to 350 (DKSKKVASKE…RSADDLAQQE (294 aa)) are disordered. Acidic residues predominate over residues 206-215 (TTEGGESEEK). Residues 248-259 (KKEEKKEDDKKD) show a composition bias toward basic and acidic residues. Composition is skewed to basic residues over residues 260–270 (KDRRKKRRRRI) and 285–296 (GAKKGGRTRSKP). The span at 297 to 319 (ITKEEPTEEEVQKQVRETLEKLQ) shows a compositional bias: basic and acidic residues. Over residues 323 to 333 (SKGKGAKYRRQ) the composition is skewed to basic residues. Residues 334-344 (KRDEHRQRSAD) show a composition bias toward basic and acidic residues. The tr-type G domain maps to 434–602 (TRAPIVTVMG…KVLLEAEILE (169 aa)). Residues 443 to 450 (GHVDHGKT) are G1. 443–450 (GHVDHGKT) contributes to the GTP binding site. The segment at 468–472 (GITQH) is G2. Residues 490–493 (DTPG) form a G3 region. GTP contacts are provided by residues 490 to 494 (DTPGH) and 544 to 547 (NKSD). The tract at residues 544-547 (NKSD) is G4. The interval 580-582 (SAK) is G5.

Belongs to the TRAFAC class translation factor GTPase superfamily. Classic translation factor GTPase family. IF-2 subfamily.

Its subcellular location is the cytoplasm. Functionally, one of the essential components for the initiation of protein synthesis. Protects formylmethionyl-tRNA from spontaneous hydrolysis and promotes its binding to the 30S ribosomal subunits. Also involved in the hydrolysis of GTP during the formation of the 70S ribosomal complex. This chain is Translation initiation factor IF-2, found in Christiangramia forsetii (strain DSM 17595 / CGMCC 1.15422 / KT0803) (Gramella forsetii).